The chain runs to 169 residues: Putative tRNA (cytidine(34)-2'-O)-methyltransferase (169 aa).

S-adenosyl-L-methionine is bound by residues V79, G104, I125, and S134.

The protein belongs to the class IV-like SAM-binding methyltransferase superfamily. RNA methyltransferase TrmH family. TrmL subfamily.

The protein resides in the cytoplasm. It catalyses the reaction cytidine(34) in tRNA + S-adenosyl-L-methionine = 2'-O-methylcytidine(34) in tRNA + S-adenosyl-L-homocysteine + H(+). The enzyme catalyses 5-carboxymethylaminomethyluridine(34) in tRNA(Leu) + S-adenosyl-L-methionine = 5-carboxymethylaminomethyl-2'-O-methyluridine(34) in tRNA(Leu) + S-adenosyl-L-homocysteine + H(+). Its function is as follows. Could methylate the ribose at the nucleotide 34 wobble position in tRNA. In Lactococcus lactis subsp. cremoris (strain MG1363), this protein is Putative tRNA (cytidine(34)-2'-O)-methyltransferase.